The following is a 190-amino-acid chain: Shikimate kinase (190 aa).

15 to 20 is a binding site for ATP; it reads GSGKST. Ser-19 is a Mg(2+) binding site. Asp-37, Arg-61, and Gly-83 together coordinate substrate. Arg-121 contacts ATP. Arg-148 contacts substrate.

This sequence belongs to the shikimate kinase family. Monomer. The cofactor is Mg(2+).

It localises to the cytoplasm. It catalyses the reaction shikimate + ATP = 3-phosphoshikimate + ADP + H(+). The protein operates within metabolic intermediate biosynthesis; chorismate biosynthesis; chorismate from D-erythrose 4-phosphate and phosphoenolpyruvate: step 5/7. In terms of biological role, catalyzes the specific phosphorylation of the 3-hydroxyl group of shikimic acid using ATP as a cosubstrate. This Chlorobium chlorochromatii (strain CaD3) protein is Shikimate kinase.